A 1715-amino-acid chain; its full sequence is Neurexin-2 (1715 aa).

A signal peptide spans 1-29; it reads MALGSRWRPPPQLPPLLLLLALVAGVRGL. The Laminin G-like 1 domain occupies 30–206; that stretch reads EFGGGPGQWA…LRGAAADPLC (177 aa). Over 30-1639 the chain is Extracellular; it reads EFGGGPGQWA…EVIRESSSTT (1610 aa). N60 carries N-linked (GlcNAc...) asparagine glycosylation. The 41-residue stretch at 202-242 folds into the EGF-like 1 domain; it reads ADPLCAPARNPCANGGLCTVLAPGEVGCDCSHTGFGGKFCS. Intrachain disulfides connect C206–C219, C213–C229, and C231–C241. Laminin G-like domains are found at residues 289–486 and 493–686; these read VATF…SFRC and DPVT…APFC. D335 serves as a coordination point for Ca(2+). An N-linked (GlcNAc...) asparagine glycan is attached at N338. Residues L352 and M420 each contribute to the Ca(2+) site. Cystine bridges form between C450/C486, C657/C686, C694/C705, C699/C714, and C716/C726. Residues 690 to 727 form the EGF-like 2 domain; the sequence is TLKQCASAPCRNGGICREGWNRFVCDCIGTGFLGRVCE. Laminin G-like domains are found at residues 732–907 and 921–1096; these read VLSY…ITYC and DPVT…ERGC. Ca(2+) contacts are provided by D779 and L796. The N-linked (GlcNAc...) asparagine glycan is linked to N844. R857 is a Ca(2+) binding site. 4 disulfides stabilise this stretch: C1068/C1096, C1103/C1114, C1108/C1123, and C1125/C1135. Positions 1099–1136 constitute an EGF-like 3 domain; that stretch reads PSTTCTEESCANQGVCLQQWDGFTCDCTMTSYGGPVCN. A Laminin G-like 6 domain is found at 1140–1348; that stretch reads TTYIFGKGGA…HLRLVGEGPS (209 aa). Ca(2+) contacts are provided by D1192 and V1209. An N-linked (GlcNAc...) asparagine glycan is attached at N1239. Ca(2+) contacts are provided by I1291 and N1293. A glycan (O-linked (Xyl...) (heparan sulfate) serine) is linked at S1403. Disordered regions lie at residues 1461–1511, 1529–1549, and 1583–1626; these read ATQD…LPPT, LLSP…ATGA, and LGPG…RGPP. The chain crosses the membrane as a helical span at residues 1640–1660; that stretch reads GMVVGIVAAAALCILILLYAM. Residues 1661-1715 are Cytoplasmic-facing; the sequence is YKYRNRDEGSYQVDQSRNYISNSAQSNGAVVKEKAPAAPKTPSKAKKNKDKEYYV. The segment at 1682-1715 is disordered; that stretch reads NSAQSNGAVVKEKAPAAPKTPSKAKKNKDKEYYV.

Belongs to the neurexin family. As to quaternary structure, the laminin G-like domain 1 binds to NXPH1. Interacts with PATJ. Interacts with CBLN1, CBLN2 and, less avidly, with CBLN4. Specific isoforms bind neuroligins NLGN1, NLGN2 and NLGN3. Isoform 5c/alpha-2C binds to alpha-dystroglycan. Interacts (via Laminin G-like 1 domain) with IGSF21 (Ig-like 1 domain) in a trans-interaction manner. Interacts with CLSTN3. O-glycosylated; contains heparan sulfate. Heparan sulfate attachment is required for synapse development by mediating interactions with neuroligins. As to expression, brain (neuronal synapse).

It is found in the presynaptic cell membrane. Its function is as follows. Neuronal cell surface protein that may be involved in cell recognition and cell adhesion. May mediate intracellular signaling. The polypeptide is Neurexin-2 (Nrxn2) (Rattus norvegicus (Rat)).